A 685-amino-acid polypeptide reads, in one-letter code: Allergen Cr-PI (685 aa).

The N-terminal stretch at 1-16 is a signal peptide; the sequence is MKTALVFAAVVAFVAA. N-linked (GlcNAc...) asparagine glycosylation occurs at Asn-233.

The protein belongs to the hemocyanin family.

Its subcellular location is the secreted. It localises to the extracellular space. Functionally, larval storage protein (LSP) which may serve as a store of amino acids for synthesis of adult proteins. This is Allergen Cr-PI from Periplaneta americana (American cockroach).